The primary structure comprises 329 residues: Tryptophan--tRNA ligase (329 aa).

ATP is bound by residues 9 to 11 and 17 to 18; these read QPS and GN. The 'HIGH' region signature appears at 10 to 18; it reads PSGIPTIGN. An L-tryptophan-binding site is contributed by Asp133. Residues 145-147, Val184, and 193-197 each bind ATP; these read GDD and KMSKS. The 'KMSKS' region signature appears at 193–197; that stretch reads KMSKS.

Belongs to the class-I aminoacyl-tRNA synthetase family. Homodimer.

It localises to the cytoplasm. The enzyme catalyses tRNA(Trp) + L-tryptophan + ATP = L-tryptophyl-tRNA(Trp) + AMP + diphosphate + H(+). Catalyzes the attachment of tryptophan to tRNA(Trp). This chain is Tryptophan--tRNA ligase, found in Staphylococcus aureus (strain MSSA476).